The following is a 428-amino-acid chain: Lysophosphatidic acid phosphatase type 6 (428 aa).

Residues 1 to 32 constitute a mitochondrion transit peptide; that stretch reads MITGVFSMRLWTPVGVLTSLAYCLHQRRVALA. The segment at 58–168 is substrate binding; sequence RHGARSPRKP…VFIRSTNIFR (111 aa). Residue His-59 is the Nucleophile of the active site. The Proton donor role is filled by Asp-335.

This sequence belongs to the histidine acid phosphatase family. As to quaternary structure, monomer.

The protein resides in the mitochondrion. It carries out the reaction a phosphate monoester + H2O = an alcohol + phosphate. The catalysed reaction is 1-(9Z-octadecenoyl)-sn-glycero-3-phosphate + H2O = 1-(9Z-octadecenoyl)-sn-glycerol + phosphate. Functionally, hydrolyzes lysophosphatidic acid (LPA) containing a medium length fatty acid chain to the corresponding monoacylglycerol. Has highest activity with lysophosphatidic acid containing myristate (C14:0), monounsaturated oleate (C18:1) or palmitate (C16:0), and lower activity with C18:0 and C6:0 lysophosphatidic acid. This is Lysophosphatidic acid phosphatase type 6 (ACP6) from Pongo abelii (Sumatran orangutan).